The chain runs to 223 residues: MADLVPVLTIDGPSGVGKGTVSKIVAARLGWHYLDSGALYRAVAVAADWAAVDVSDTTALVKCAFDTCVNFAECADGEMRVLVNSIDATDVLRMETTGVLASTIASISEVRATLKKRQQMFRRTPGLVADGRDMGTVIFPDAKYKVFLTAKAEERAQRRYKQLMKKGVSVMFGALLEEIRARDARDACRSVAPLKPADDALLIDSTCMEVDEVVAQVLALVTD.

An ATP-binding site is contributed by 12–20 (GPSGVGKGT).

It belongs to the cytidylate kinase family. Type 1 subfamily.

The protein resides in the cytoplasm. It carries out the reaction CMP + ATP = CDP + ADP. The enzyme catalyses dCMP + ATP = dCDP + ADP. In Xylella fastidiosa (strain M23), this protein is Cytidylate kinase.